The sequence spans 96 residues: MTLVAGIDSSTQSCKVVIRDADTGVLIRSSRASHPDGTEVDPEFWFDALQEAIAQAGGLDDVAAISVGGQQHGMVALDATGAVIRPALLWNDNRSA.

Residue 71-72 coordinates substrate; it reads QH.

Belongs to the FGGY kinase family.

It carries out the reaction D-xylulose + ATP = D-xylulose 5-phosphate + ADP + H(+). Its function is as follows. Catalyzes the phosphorylation of D-xylulose to D-xylulose 5-phosphate. The polypeptide is Xylulose kinase (Arthrobacter sp. (strain NRRL B3728)).